The primary structure comprises 799 residues: Ribonucleoside-diphosphate reductase large subunit (799 aa).

Substrate is bound by residues Thr-192, 207 to 208 (SC), Gly-238, 408 to 412 (NLCAE), and 612 to 616 (PTAGT). The cysteines at positions 208 and 424 are disulfide-linked. Asn-408 acts as the Proton acceptor in catalysis. Catalysis depends on Cys-410, which acts as the Cysteine radical intermediate. Catalysis depends on Glu-412, which acts as the Proton acceptor. The interval 765–799 (PDSGDGVGGYKGGDEEPRSPEHAQCESPDRCLSCQ) is disordered. The span at 776–793 (GGDEEPRSPEHAQCESPD) shows a compositional bias: basic and acidic residues.

It belongs to the ribonucleoside diphosphate reductase large chain family. Heterotetramer composed of a homodimer of the large subunit (R1) and a homodimer of the small subunit (R2). Larger multisubunit protein complex are also active, composed of (R1)n(R2)n.

The catalysed reaction is a 2'-deoxyribonucleoside 5'-diphosphate + [thioredoxin]-disulfide + H2O = a ribonucleoside 5'-diphosphate + [thioredoxin]-dithiol. In terms of biological role, ribonucleoside-diphosphate reductase holoenzyme provides the precursors necessary for viral DNA synthesis. Allows virus growth in non-dividing cells, as well as reactivation from latency in infected hosts. Catalyzes the biosynthesis of deoxyribonucleotides from the corresponding ribonucleotides. The chain is Ribonucleoside-diphosphate reductase large subunit from Equine herpesvirus 2 (strain 86/87) (EHV-2).